The primary structure comprises 1305 residues: Cyclin-G-associated kinase (1305 aa).

Position 2 is an N-acetylserine (Ser2). Phosphoserine occurs at positions 2 and 16. Residues 40-317 (LRVRRVLAEG…EVVRQLQEIA (278 aa)) form the Protein kinase domain. ATP-binding positions include 46-54 (LAEGGFAFV) and Lys69. Asp173 acts as the Proton acceptor in catalysis. A Phosphatase tensin-type domain is found at 397 to 564 (SVANYAKGDL…EYVCDMVAEE (168 aa)). Ser454 is subject to Phosphoserine. The C2 tensin-type domain maps to 570–708 (SKPMLVKSVV…FQVNLEVEVE (139 aa)). 2 disordered regions span residues 707 to 732 (VEPR…NPKI) and 747 to 854 (FGKP…AAGT). Ser768 is subject to Phosphoserine. Phosphothreonine is present on Thr774. The span at 776–789 (SDSPQSSSTDTNHF) shows a compositional bias: polar residues. Position 781 is a phosphoserine (Ser781). Residue Thr792 is modified to Phosphothreonine. Positions 805 to 816 (LDNTSPKESQSV) are enriched in polar residues. Phosphoserine occurs at positions 809, 824, and 827. Positions 822–832 (DGSEVSDEEEA) are enriched in acidic residues. A compositionally biased stretch (basic and acidic residues) spans 836–848 (SEERKPGAGEDTP). Ser938 carries the phosphoserine modification. The tract at residues 1037-1139 (DTWADTATPG…WTPQAKPAPR (103 aa)) is disordered. Positions 1084-1099 (DLSDLSSSLQGLPAGL) are enriched in low complexity. Residues 1111–1132 (TQKSNSPWQANRPTAPGTSWTP) show a composition bias toward polar residues. Omega-N-methylarginine is present on Arg1122. Phosphoserine is present on Ser1171. Residues 1241–1305 (SRWTPVSMAD…FENQGSRPLF (65 aa)) enclose the J domain.

The protein belongs to the protein kinase superfamily. Ser/Thr protein kinase family.

It localises to the cytoplasm. It is found in the perinuclear region. The protein localises to the golgi apparatus. The protein resides in the trans-Golgi network. Its subcellular location is the cell junction. It localises to the focal adhesion. It is found in the cytoplasmic vesicle. The protein localises to the clathrin-coated vesicle. The catalysed reaction is L-seryl-[protein] + ATP = O-phospho-L-seryl-[protein] + ADP + H(+). It catalyses the reaction L-threonyl-[protein] + ATP = O-phospho-L-threonyl-[protein] + ADP + H(+). Associates with cyclin G and CDK5. Seems to act as an auxilin homolog that is involved in the uncoating of clathrin-coated vesicles by Hsc70 in non-neuronal cells. Expression oscillates slightly during the cell cycle, peaking at G1. May play a role in clathrin-mediated endocytosis and intracellular trafficking, and in the dynamics of clathrin assembly/disassembly. The protein is Cyclin-G-associated kinase of Mus musculus (Mouse).